Consider the following 305-residue polypeptide: MDSSAKGSKKDAPDGPPKDSKLPVSEALLDYHREIKENAVERFMFHIKKLREKNQKYQERNRRLKEEQNWHIKNLIKELKEKNLDEAPIVTREEVEEAMKEKWEFERQQEASLKEMRIQINEAEKLFLEKLSEKEYWEEYKNVGSAQHAQLIVSLQNDIDTVKENAEKMSEQYKVTLEDEKKRISRETMIQLKQRKEWATQHAVRFIDKNNYREIWENDWLKKEGDTASFGNVLSLLDFLPPDLHTAEPCVSSGQSRGSLRILAPFALQLWSKLSGLLPTLVTPDPVCIIWSFGPGQTNSMAICP.

Positions 1–25 are disordered; sequence MDSSAKGSKKDAPDGPPKDSKLPVS. Residues 8–21 show a composition bias toward basic and acidic residues; sequence SKKDAPDGPPKDSK. The stretch at 37-186 forms a coiled coil; the sequence is ENAVERFMFH…LEDEKKRISR (150 aa).

This is Coiled-coil domain-containing protein 83 (Ccdc83) from Mus musculus (Mouse).